The sequence spans 93 residues: Muconolactone Delta-isomerase (93 aa).

It belongs to the muconolactone Delta-isomerase family. As to quaternary structure, homodecamer.

It carries out the reaction (S)-muconolactone = (4,5-dihydro-5-oxofuran-2-yl)-acetate. The protein operates within aromatic compound metabolism; beta-ketoadipate pathway; 5-oxo-4,5-dihydro-2-furylacetate from catechol: step 3/3. This Rhodococcus opacus (Nocardia opaca) protein is Muconolactone Delta-isomerase (catC).